Reading from the N-terminus, the 26-residue chain is Halocyntin (26 aa).

Functionally, has strong antibacterial activity against the Gram-positive bacteria M.luteus, S.aureus, B.megaterium, A.viridans and E.faecalis, and against the Gram-negative bacterium K.pneumoniae. Has less potent antibacterial activity against the Gram-negative bacteria E.coli DH5alpha, S.typhimurium, P.aeruginosa, E.aerogenes and N.gonorrhoeae. Has moderate hemolytic activity against sheep erythrocytes. In Halocynthia papillosa (Red sea-squirt), this protein is Halocyntin.